Here is a 467-residue protein sequence, read N- to C-terminus: Glutamate--tRNA ligase (467 aa).

Residues 12-22 (PSPTGYLHIGG) carry the 'HIGH' region motif. The segment covering 114–128 (EQEAKKEKPRYDGRW) has biased composition (basic and acidic residues). Residues 114–140 (EQEAKKEKPRYDGRWRPAPGKTLPTPP) form a disordered region. Positions 244–248 (KLSKR) match the 'KMSKS' region motif. An ATP-binding site is contributed by Lys247.

It belongs to the class-I aminoacyl-tRNA synthetase family. Glutamate--tRNA ligase type 1 subfamily. Monomer.

It is found in the cytoplasm. The enzyme catalyses tRNA(Glu) + L-glutamate + ATP = L-glutamyl-tRNA(Glu) + AMP + diphosphate. Catalyzes the attachment of glutamate to tRNA(Glu) in a two-step reaction: glutamate is first activated by ATP to form Glu-AMP and then transferred to the acceptor end of tRNA(Glu). In Azoarcus sp. (strain BH72), this protein is Glutamate--tRNA ligase.